The sequence spans 507 residues: Maturase K (507 aa).

It belongs to the intron maturase 2 family. MatK subfamily.

The protein resides in the plastid. It localises to the chloroplast. Its function is as follows. Usually encoded in the trnK tRNA gene intron. Probably assists in splicing its own and other chloroplast group II introns. The polypeptide is Maturase K (Humulus lupulus (European hop)).